The sequence spans 2878 residues: Trinucleotide repeat-containing gene 18 protein (2878 aa).

Disordered regions lie at residues 1–54 (MDGR…KYMA) and 102–194 (TQKD…SSRL). A compositionally biased stretch (polar residues) spans 119–128 (TPSSRTPSGH). Basic and acidic residues-rich tracts occupy residues 137–149 (SSREGTGKDRAGR), 158–169 (GKKDPRAREEVS), and 179–194 (QEARAEGRQDRGSSRL). Serine 199 is subject to Phosphoserine. Disordered stretches follow at residues 259–289 (ARPCGSPLPPPPPLPPKGPPAPPSSTPAGVY), 313–442 (FDER…KWKP), 487–507 (MPRASATCGRPGADLHSAAHG), 540–655 (SPFG…DDEC), 865–1002 (AQEH…ALFT), 1033–1104 (ADGL…LESP), 1127–1146 (LEAQALSTAGPGCREPSEVS), 1171–1228 (LGTQ…DCDL), 1429–1535 (ELVK…DSSS), 1613–1668 (LGLS…DEDE), 1694–1718 (VPKNSKPATGPKLTKRGLAGPRTLK), and 1737–1787 (EARS…GEQA). Residues 264-283 (SPLPPPPPLPPKGPPAPPSS) show a composition bias toward pro residues. 2 stretches are compositionally biased toward basic and acidic residues: residues 327 to 337 (RDVRAREREPG) and 350 to 362 (RLERPEVLREKSS). Residues 376 to 390 (PPAARSSRSSPDARA) are compositionally biased toward low complexity. The span at 396-411 (ELLKPEADPRPCERAP) shows a compositional bias: basic and acidic residues. Position 540 is a phosphoserine (serine 540). A Glycyl lysine isopeptide (Lys-Gly) (interchain with G-Cter in SUMO2) cross-link involves residue lysine 549. Basic and acidic residues-rich tracts occupy residues 580–589 (LKRDPERPES) and 865–881 (AQEHRTEMEEKISKRSL). A compositionally biased stretch (pro residues) spans 958-969 (SSPPPASPPPTP). Positions 972-993 (TRKEEAPENVVEKKDLELEKET) are enriched in basic and acidic residues. A phosphoserine mark is found at serine 1053 and serine 1062. The span at 1068 to 1088 (EPPRDSPEEEQLADREVKAEV) shows a compositional bias: basic and acidic residues. Positions 1410-1442 (LDFRMRLAEVQRRYKEKQRELVKLQRRRDSGDR) form a coiled coil. Residues 1429-1448 (ELVKLQRRRDSGDRHEDAHR) show a composition bias toward basic and acidic residues. Basic residues predominate over residues 1449–1463 (SLARRGPGRPRKRTH). A Phosphoserine modification is found at serine 1469. The segment covering 1478–1492 (SSSGKGLSSKSLLTS) has biased composition (low complexity). The span at 1745-1775 (SSEEDSFDQDDSSEEEEEELEEEEEDEEEEG) shows a compositional bias: acidic residues. Phosphoserine is present on residues serine 1789 and serine 1795. The span at 1825–1835 (EQKARKKEERQ) shows a compositional bias: basic and acidic residues. 3 disordered regions span residues 1825-2040 (EQKA…GAVS), 2052-2080 (FEANQDSSFSEDEHLPRGGATERPLTPAP), and 2226-2681 (LLVP…RLPS). A compositionally biased stretch (low complexity) spans 1876-1890 (AAPGPGSRASGPSSP). Basic and acidic residues-rich tracts occupy residues 1891-1900 (DKAKLVSEKG), 1925-1936 (LWTRRRSERIFL), 1966-1978 (PRKDTGRAKDRKD), and 2024-2034 (RGKEAKKENRG). Phosphothreonine is present on threonine 2077. Positions 2238–2247 (TSKDTGEVKE) are enriched in basic and acidic residues. Positions 2261–2270 (ARGRGRKPST) are enriched in basic residues. Basic and acidic residues-rich tracts occupy residues 2307 to 2316 (STPEPVDKRA) and 2409 to 2419 (AKEALLLREDP). Low complexity-rich tracts occupy residues 2460–2470 (EPGPGLPLEDP), 2491–2520 (TTSSSSSSSSSSSSSSSSSSSSSSSSSGSE), and 2540–2578 (RTCSAASSRASSPASSSSSSSSSSSSSSSSSSSSSSSST). The span at 2579–2591 (TDEDSSCSSDEEA) shows a compositional bias: acidic residues. The span at 2631 to 2641 (TQPPPQPPPQP) shows a compositional bias: pro residues. Serine 2681 is modified (phosphoserine). The 146-residue stretch at 2727-2872 (EMIRIGDCAV…PTTGMIFSTD (146 aa)) folds into the BAH domain.

The sequence is that of Trinucleotide repeat-containing gene 18 protein (Tnrc18) from Mus musculus (Mouse).